We begin with the raw amino-acid sequence, 555 residues long: Formate--tetrahydrofolate ligase (555 aa).

ATP is bound at residue 65–72 (TPAGEGKT).

Belongs to the formate--tetrahydrofolate ligase family.

It carries out the reaction (6S)-5,6,7,8-tetrahydrofolate + formate + ATP = (6R)-10-formyltetrahydrofolate + ADP + phosphate. The protein operates within one-carbon metabolism; tetrahydrofolate interconversion. In Thermoanaerobacter sp. (strain X514), this protein is Formate--tetrahydrofolate ligase.